We begin with the raw amino-acid sequence, 81 residues long: uncharacterized protein (81 aa).

Residues 1–20 form the signal peptide; it reads MIDDHEALLLLVLSSGPAAL.

This is an uncharacterized protein from Treponema pallidum (strain Nichols).